Here is a 176-residue protein sequence, read N- to C-terminus: NAD(P)H-quinone oxidoreductase subunit 6, chloroplastic (176 aa).

The next 5 membrane-spanning stretches (helical) occupy residues 10–30 (FLLV…VLLP), 32–52 (PIFS…LYIL), 61–81 (AQLL…VMFM), 92–112 (LWTV…FSLM), and 152–172 (FFLP…GAIS).

Belongs to the complex I subunit 6 family. As to quaternary structure, NDH is composed of at least 16 different subunits, 5 of which are encoded in the nucleus.

The protein resides in the plastid. Its subcellular location is the chloroplast thylakoid membrane. It carries out the reaction a plastoquinone + NADH + (n+1) H(+)(in) = a plastoquinol + NAD(+) + n H(+)(out). The catalysed reaction is a plastoquinone + NADPH + (n+1) H(+)(in) = a plastoquinol + NADP(+) + n H(+)(out). In terms of biological role, NDH shuttles electrons from NAD(P)H:plastoquinone, via FMN and iron-sulfur (Fe-S) centers, to quinones in the photosynthetic chain and possibly in a chloroplast respiratory chain. The immediate electron acceptor for the enzyme in this species is believed to be plastoquinone. Couples the redox reaction to proton translocation, and thus conserves the redox energy in a proton gradient. This Nasturtium officinale (Watercress) protein is NAD(P)H-quinone oxidoreductase subunit 6, chloroplastic (ndhG).